Consider the following 290-residue polypeptide: 4-diphosphocytidyl-2-C-methyl-D-erythritol kinase (290 aa).

K13 is an active-site residue. Residue 96-106 (PMGGGIGGGSS) participates in ATP binding. D138 is an active-site residue.

It belongs to the GHMP kinase family. IspE subfamily.

The catalysed reaction is 4-CDP-2-C-methyl-D-erythritol + ATP = 4-CDP-2-C-methyl-D-erythritol 2-phosphate + ADP + H(+). It participates in isoprenoid biosynthesis; isopentenyl diphosphate biosynthesis via DXP pathway; isopentenyl diphosphate from 1-deoxy-D-xylulose 5-phosphate: step 3/6. Functionally, catalyzes the phosphorylation of the position 2 hydroxy group of 4-diphosphocytidyl-2C-methyl-D-erythritol. The chain is 4-diphosphocytidyl-2-C-methyl-D-erythritol kinase from Vibrio vulnificus (strain CMCP6).